Consider the following 881-residue polypeptide: MNSTETMADLSSYTPMMQQYFKVKLEHQHALLFYRMGDFYELFFDDARKAAKLLGITLTHRGKANGEPIPMAGVPYHAAEGYLARLVRAGQTVAICEQVGEGENAGSRCKAPMERKVVRIITPGTITDDALLGSYQSSNLVALCIQQNKIGIALLDLSASIFKVQQHEFKTEQLYIELARLMPSEIVVDEDLVDQNILEQIKKQIECSITKRPNVDFNLNNAQKTLCDQFGVTTLSGFGIDHLPLAKAAAAALIHYAKETQKTALPHIRSIQLEQSTDFIALDPITRRNLEIIDPLFEHGTSLFNLINDCQTAMGGRLLSRILMQPIRDTAILDARLDATEQLLIGYHESPVRLVLKEIGDIERVLSRVALGTARPRDLVQLRQACAQIPFLRHALLPAIQTKSSKLLNELDHELGDFKDLHQLLLSAIVENPPVLLRDGNVIAEGYDAELDELRKIRDHAGQFLVDLEIKERESSGIPTLKIGYNRVSGYYIELTRAQAEQAPAYYIRRQTLKNAERYITPELKSFEDKVLSSESRALAREKLLFESLLETLKKNIANLQMMSSAIAQIDVLANFAHQARLQNWNRPDFSPEIGIKIHDGRHPVVEALSKTPYTPNDTFLDSQHRMAIITGPNMGGKSTFMRQTALISLLAYCGSYVPAKSAKLGPIDRIFTRIGSADDLSTGKSTFMVEMTETSQILHHATHQSLVLMDEVGRGTSTYDGLSLAWACVLDLTKRIKCLCLFATHYFELTELGSESAIDNYHVTAKEMNGNLILLHKVQHGPASQSHGLQVAKLAGIPASVIKEAQKRLKILEKQQQQYFQTAVQNDLFAIPELPQIDETKIEIKKTSPVLDHLKQLDVDSLTPRQALEALYQLKDQLEH.

632–639 (GPNMGGKS) is a binding site for ATP.

It belongs to the DNA mismatch repair MutS family.

Functionally, this protein is involved in the repair of mismatches in DNA. It is possible that it carries out the mismatch recognition step. This protein has a weak ATPase activity. The sequence is that of DNA mismatch repair protein MutS from Acinetobacter baylyi (strain ATCC 33305 / BD413 / ADP1).